The primary structure comprises 471 residues: MNTKYSYGKVYQVVGPVVDVVFEKQDDLPKIYDCLIIDEPNMKLHLEVAQLIGDDIARCIAMGPTEGLARNVKVTSTNQPISVPVGTEVLGRMFNVIGEPIDEKKPIDASVKRMSIHRPAPSFADQSNELEIFETGIKVIDLLIPYAKGGKIGLFGGAGVGKTVLVQELIHNIATGHGGLSVFAGVGERTREGNDLYYEMIEGGVIDKTALVFGQMNEPPGARMRVALTGLTMAEYFRDVNNQDVLLFIDNIFRFTQAGSEVSALLGRMPSAVGYQPTLAEEMGSLQERITSTKSGSITSVQAIYVPADDLTDPAPSTTFTHLDAKTVLDRNIASLGIFPAVNPLDSTSRLLDPSVVGIQHYQTARKVQMILQKFLELQDIIAILGIDELSEEDKLTVSRARKIRNFLSQPFFVAEKFSGNKGKYVPISETIKGFSEIVEGKHDDLPEQAFFYVGSIDEAIERAKTLTRNG.

156–163 (GGAGVGKT) is a binding site for ATP.

The protein belongs to the ATPase alpha/beta chains family. F-type ATPases have 2 components, CF(1) - the catalytic core - and CF(0) - the membrane proton channel. CF(1) has five subunits: alpha(3), beta(3), gamma(1), delta(1), epsilon(1). CF(0) has three main subunits: a(1), b(2) and c(9-12). The alpha and beta chains form an alternating ring which encloses part of the gamma chain. CF(1) is attached to CF(0) by a central stalk formed by the gamma and epsilon chains, while a peripheral stalk is formed by the delta and b chains.

The protein localises to the cell membrane. It carries out the reaction ATP + H2O + 4 H(+)(in) = ADP + phosphate + 5 H(+)(out). Produces ATP from ADP in the presence of a proton gradient across the membrane. The catalytic sites are hosted primarily by the beta subunits. The protein is ATP synthase subunit beta of Mycoplasmoides gallisepticum (strain R(low / passage 15 / clone 2)) (Mycoplasma gallisepticum).